The chain runs to 249 residues: 4-hydroxy-tetrahydrodipicolinate reductase (249 aa).

NAD(+) is bound by residues 8 to 13 (GVTGQM), 87 to 89 (GTT), and 111 to 114 (ATNF). His143 serves as the catalytic Proton donor/acceptor. A (S)-2,3,4,5-tetrahydrodipicolinate-binding site is contributed by His144. Catalysis depends on Lys147, which acts as the Proton donor. 153–154 (GT) contributes to the (S)-2,3,4,5-tetrahydrodipicolinate binding site.

It belongs to the DapB family.

The protein localises to the cytoplasm. The enzyme catalyses (S)-2,3,4,5-tetrahydrodipicolinate + NAD(+) + H2O = (2S,4S)-4-hydroxy-2,3,4,5-tetrahydrodipicolinate + NADH + H(+). The catalysed reaction is (S)-2,3,4,5-tetrahydrodipicolinate + NADP(+) + H2O = (2S,4S)-4-hydroxy-2,3,4,5-tetrahydrodipicolinate + NADPH + H(+). It participates in amino-acid biosynthesis; L-lysine biosynthesis via DAP pathway; (S)-tetrahydrodipicolinate from L-aspartate: step 4/4. In terms of biological role, catalyzes the conversion of 4-hydroxy-tetrahydrodipicolinate (HTPA) to tetrahydrodipicolinate. The polypeptide is 4-hydroxy-tetrahydrodipicolinate reductase (Haloarcula marismortui (strain ATCC 43049 / DSM 3752 / JCM 8966 / VKM B-1809) (Halobacterium marismortui)).